Here is a 90-residue protein sequence, read N- to C-terminus: UPF0223 protein LMHCC_1569 (90 aa).

Belongs to the UPF0223 family.

This Listeria monocytogenes serotype 4a (strain HCC23) protein is UPF0223 protein LMHCC_1569.